Here is a 194-residue protein sequence, read N- to C-terminus: RNA polymerase II subunit A C-terminal domain phosphatase SSU72 like protein 5 (194 aa).

It belongs to the SSU72 phosphatase family.

The protein localises to the nucleus. The catalysed reaction is O-phospho-L-seryl-[protein] + H2O = L-seryl-[protein] + phosphate. The enzyme catalyses O-phospho-L-threonyl-[protein] + H2O = L-threonyl-[protein] + phosphate. In terms of biological role, protein phosphatase that catalyzes the dephosphorylation of the C-terminal domain of RNA polymerase II. Plays a role in RNA processing and termination. This chain is RNA polymerase II subunit A C-terminal domain phosphatase SSU72 like protein 5, found in Homo sapiens (Human).